Consider the following 477-residue polypeptide: tRNA-2-methylthio-N(6)-dimethylallyladenosine synthase (477 aa).

Positions 3–120 (KKLFIKTWGC…LPEMINQIKG (118 aa)) constitute an MTTase N-terminal domain. 6 residues coordinate [4Fe-4S] cluster: cysteine 12, cysteine 49, cysteine 83, cysteine 157, cysteine 161, and cysteine 164. Positions 143-375 (KAEGPTAFVS…QNRITQQALR (233 aa)) constitute a Radical SAM core domain. The TRAM domain occupies 378-441 (RNMIDSEQRV…ANSLRGDVLR (64 aa)).

The protein belongs to the methylthiotransferase family. MiaB subfamily. In terms of assembly, monomer. Requires [4Fe-4S] cluster as cofactor.

The protein localises to the cytoplasm. The catalysed reaction is N(6)-dimethylallyladenosine(37) in tRNA + (sulfur carrier)-SH + AH2 + 2 S-adenosyl-L-methionine = 2-methylsulfanyl-N(6)-dimethylallyladenosine(37) in tRNA + (sulfur carrier)-H + 5'-deoxyadenosine + L-methionine + A + S-adenosyl-L-homocysteine + 2 H(+). Catalyzes the methylthiolation of N6-(dimethylallyl)adenosine (i(6)A), leading to the formation of 2-methylthio-N6-(dimethylallyl)adenosine (ms(2)i(6)A) at position 37 in tRNAs that read codons beginning with uridine. The polypeptide is tRNA-2-methylthio-N(6)-dimethylallyladenosine synthase (Pseudoalteromonas atlantica (strain T6c / ATCC BAA-1087)).